Here is an 87-residue protein sequence, read N- to C-terminus: Phosphocarrier protein HPr (87 aa).

The 87-residue stretch at 1-87 (MAEKTFTITA…EEVIKEGLGE (87 aa)) folds into the HPr domain. The active-site Pros-phosphohistidine intermediate is the H15. A Phosphoserine; by HPrK/P modification is found at S46.

This sequence belongs to the HPr family.

Its subcellular location is the cytoplasm. Phosphorylation on Ser-46 inhibits the phosphoryl transfer from enzyme I to HPr. Functionally, general (non sugar-specific) component of the phosphoenolpyruvate-dependent sugar phosphotransferase system (sugar PTS). This major carbohydrate active-transport system catalyzes the phosphorylation of incoming sugar substrates concomitantly with their translocation across the cell membrane. The phosphoryl group from phosphoenolpyruvate (PEP) is transferred to the phosphoryl carrier protein HPr by enzyme I. Phospho-HPr then transfers it to the PTS EIIA domain. In terms of biological role, P-Ser-HPr interacts with the catabolite control protein A (CcpA), forming a complex that binds to DNA at the catabolite response elements cre, operator sites preceding a large number of catabolite-regulated genes. Thus, P-Ser-HPr is a corepressor in carbon catabolite repression (CCR), a mechanism that allows bacteria to coordinate and optimize the utilization of available carbon sources. P-Ser-HPr also plays a role in inducer exclusion, in which it probably interacts with several non-PTS permeases and inhibits their transport activity. The polypeptide is Phosphocarrier protein HPr (ptsH) (Halalkalibacterium halodurans (strain ATCC BAA-125 / DSM 18197 / FERM 7344 / JCM 9153 / C-125) (Bacillus halodurans)).